A 196-amino-acid chain; its full sequence is Imidazole glycerol phosphate synthase subunit HisH (196 aa).

The Glutamine amidotransferase type-1 domain maps to 2–196 (KVAVIKYNAG…ERIIKNFLEL (195 aa)). The active-site Nucleophile is the cysteine 77. Catalysis depends on residues histidine 178 and glutamate 180.

Heterodimer of HisH and HisF.

The protein resides in the cytoplasm. The catalysed reaction is 5-[(5-phospho-1-deoxy-D-ribulos-1-ylimino)methylamino]-1-(5-phospho-beta-D-ribosyl)imidazole-4-carboxamide + L-glutamine = D-erythro-1-(imidazol-4-yl)glycerol 3-phosphate + 5-amino-1-(5-phospho-beta-D-ribosyl)imidazole-4-carboxamide + L-glutamate + H(+). It carries out the reaction L-glutamine + H2O = L-glutamate + NH4(+). Its pathway is amino-acid biosynthesis; L-histidine biosynthesis; L-histidine from 5-phospho-alpha-D-ribose 1-diphosphate: step 5/9. Its function is as follows. IGPS catalyzes the conversion of PRFAR and glutamine to IGP, AICAR and glutamate. The HisH subunit catalyzes the hydrolysis of glutamine to glutamate and ammonia as part of the synthesis of IGP and AICAR. The resulting ammonia molecule is channeled to the active site of HisF. This is Imidazole glycerol phosphate synthase subunit HisH from Bacteroides fragilis (strain YCH46).